Here is a 384-residue protein sequence, read N- to C-terminus: Glycerol 3-phosphate oxidase (384 aa).

An N-terminal signal peptide occupies residues 1-17; the sequence is MQTIDVLIVGGGVIGTS. Ile14 contributes to the FAD binding site. Cys18 is lipidated: N-palmitoyl cysteine. Cys18 is lipidated: S-diacylglycerol cysteine. Residues Glu33, 42-43, and 47-49 contribute to the FAD site; these read TS and SGV. Sn-glycerol 3-phosphate contacts are provided by Ser47 and His51. Catalysis depends on His51, which acts as the Proton acceptor. Position 177 (Val177) interacts with FAD. Lys258 and Arg320 together coordinate sn-glycerol 3-phosphate. 346 to 347 contacts FAD; it reads MK. Position 348 (Ser348) interacts with sn-glycerol 3-phosphate. Thr352 contacts FAD.

In terms of assembly, monomer. Requires FAD as cofactor.

It is found in the cytoplasm. The protein localises to the cell membrane. It carries out the reaction sn-glycerol 3-phosphate + O2 = dihydroxyacetone phosphate + H2O2. It functions in the pathway polyol metabolism; glycerol degradation via glycerol kinase pathway; glycerone phosphate from sn-glycerol 3-phosphate (aerobic route): step 1/1. In terms of biological role, catalyzes the oxidation of glycerol 3-phosphate to dihydroxyacetone phosphate (DHAP), with a reduction of O2 to H2O2. The formation of hydrogen peroxide by this enzyme is crucial for cytotoxic effects on host cells. Does not show any dehydrogenase activity with NAD(+). This is Glycerol 3-phosphate oxidase from Mycoplasma genitalium (strain ATCC 33530 / DSM 19775 / NCTC 10195 / G37) (Mycoplasmoides genitalium).